A 220-amino-acid chain; its full sequence is Adenylate kinase (220 aa).

ATP is bound at residue 13–18 (GAGKGT). The segment at 33-62 (STGDILRAAVKEGTPLGLEAQSYMNRGALV) is NMP. AMP-binding positions include Thr34, Arg39, 60 to 62 (ALV), 88 to 91 (GFPR), and Gln95. The segment at 129–170 (GRRTCPLCKRIFHVRFNPPPAAPPFCTDHTDCPSELVQRPDD) is LID. Arg130 contributes to the ATP binding site. Positions 133 and 136 each coordinate Zn(2+). 139–140 (IF) is an ATP binding site. Zn(2+) is bound by residues Asp156 and Cys160. Residues Arg167 and Arg178 each coordinate AMP. Arg206 is a binding site for ATP.

It belongs to the adenylate kinase family. As to quaternary structure, monomer.

The protein localises to the cytoplasm. The catalysed reaction is AMP + ATP = 2 ADP. Its pathway is purine metabolism; AMP biosynthesis via salvage pathway; AMP from ADP: step 1/1. Catalyzes the reversible transfer of the terminal phosphate group between ATP and AMP. Plays an important role in cellular energy homeostasis and in adenine nucleotide metabolism. This is Adenylate kinase from Gloeobacter violaceus (strain ATCC 29082 / PCC 7421).